The following is a 418-amino-acid chain: Glycine betaine transport ATP-binding protein OpuAA (418 aa).

The region spanning 34–270 (KTKKEILKAT…PSNEYVEKFV (237 aa)) is the ABC transporter domain. 66–73 (GLSGSGKS) contributes to the ATP binding site. 2 consecutive CBS domains span residues 284 to 340 (IMKR…DLSL) and 344 to 403 (LNTE…INAE).

This sequence belongs to the ABC transporter superfamily. As to quaternary structure, the complex is composed of two ATP-binding proteins (OpuAA), two transmembrane proteins (OpuAB) and a solute-binding protein (OpuAC).

The catalysed reaction is a quaternary ammonium(out) + ATP + H2O = a quaternary ammonium(in) + ADP + phosphate + H(+). Functionally, involved in a multicomponent binding-protein-dependent transport system for glycine betaine. Probably responsible for energy coupling to the transport system. In Bacillus subtilis (strain 168), this protein is Glycine betaine transport ATP-binding protein OpuAA (opuAA).